We begin with the raw amino-acid sequence, 278 residues long: Protein FixR (278 aa).

Residue 40–64 coordinates NAD(+); sequence LLTGASRGIGHATAKLFSEAGWRII. Ser175 contacts substrate. Residue Tyr189 is the Proton acceptor of the active site.

This sequence belongs to the short-chain dehydrogenases/reductases (SDR) family.

This chain is Protein FixR (fixR), found in Bradyrhizobium diazoefficiens (strain JCM 10833 / BCRC 13528 / IAM 13628 / NBRC 14792 / USDA 110).